We begin with the raw amino-acid sequence, 499 residues long: Bifunctional purine biosynthesis protein PurH (499 aa).

The MGS-like domain maps to 1-144 (MIKRALISVF…KNFKDVVVLT (144 aa)).

Belongs to the PurH family.

It carries out the reaction (6R)-10-formyltetrahydrofolate + 5-amino-1-(5-phospho-beta-D-ribosyl)imidazole-4-carboxamide = 5-formamido-1-(5-phospho-D-ribosyl)imidazole-4-carboxamide + (6S)-5,6,7,8-tetrahydrofolate. It catalyses the reaction IMP + H2O = 5-formamido-1-(5-phospho-D-ribosyl)imidazole-4-carboxamide. Its pathway is purine metabolism; IMP biosynthesis via de novo pathway; 5-formamido-1-(5-phospho-D-ribosyl)imidazole-4-carboxamide from 5-amino-1-(5-phospho-D-ribosyl)imidazole-4-carboxamide (10-formyl THF route): step 1/1. The protein operates within purine metabolism; IMP biosynthesis via de novo pathway; IMP from 5-formamido-1-(5-phospho-D-ribosyl)imidazole-4-carboxamide: step 1/1. This Clostridium botulinum (strain Okra / Type B1) protein is Bifunctional purine biosynthesis protein PurH.